We begin with the raw amino-acid sequence, 1004 residues long: Phyllocladan-16-alpha-ol synthase (1004 aa).

Positions aspartate 321–aspartate 324 match the DXDD motif motif. The Mg(2+) site is built by aspartate 667, glutamate 671, asparagine 872, aspartate 873, serine 876, and aspartate 880. The short motif at aspartate 667–glutamate 671 is the DEXXE motif element.

Belongs to the terpene synthase family. Mg(2+) serves as cofactor.

It carries out the reaction (2E,6E,10E)-geranylgeranyl diphosphate = (+)-copalyl diphosphate. The enzyme catalyses (+)-copalyl diphosphate + H2O = phyllocladan-16alpha-ol + diphosphate. Involved in the synthesis of labdane-related hydrocarbons by catalyzing the conversion of geranylgeranyl diphosphate (GGDP) to phyllocladan-16-alpha-ol in a two step via type B cyclization into a (+)-copalyl diphosphate ((+)-CDP) intermediate. This Phomopsis amygdali (Fusicoccum amygdali) protein is Phyllocladan-16-alpha-ol synthase (PaDC1).